Reading from the N-terminus, the 42-residue chain is Photosystem II reaction center protein J (42 aa).

The helical transmembrane segment at 10–30 threads the bilayer; it reads IPLWFIGVIAGIAALSIVGLF.

It belongs to the PsbJ family. As to quaternary structure, PSII is composed of 1 copy each of membrane proteins PsbA, PsbB, PsbC, PsbD, PsbE, PsbF, PsbH, PsbI, PsbJ, PsbK, PsbL, PsbM, PsbT, PsbX, PsbY, PsbZ, Psb30/Ycf12, at least 3 peripheral proteins of the oxygen-evolving complex and a large number of cofactors. It forms dimeric complexes.

It is found in the plastid. The protein localises to the chloroplast thylakoid membrane. One of the components of the core complex of photosystem II (PSII). PSII is a light-driven water:plastoquinone oxidoreductase that uses light energy to abstract electrons from H(2)O, generating O(2) and a proton gradient subsequently used for ATP formation. It consists of a core antenna complex that captures photons, and an electron transfer chain that converts photonic excitation into a charge separation. The chain is Photosystem II reaction center protein J from Zygnema circumcarinatum (Green alga).